The primary structure comprises 208 residues: MGRKRSASSSRWLAEHFKDQFVQKAHKQKLRSRAYFKLDEIQQTDRLFKHGMTVVDLGAAPGGWSQYVVTQIGDKGRVIACDILDMNPIVGVDFLQGDFCEESVLNALLERVGEGKVDVVMSDMAPNFSGMSSVDIPRAMYLVELALDMCRQVLAPKGSFVVKVFQGEGFDDYLREIRSLFNVVKVRKPEASRDRSREVYIVATGYKG.

The S-adenosyl-L-methionine site is built by Gly-62, Trp-64, Asp-82, Asp-98, and Asp-123. Lys-163 acts as the Proton acceptor in catalysis.

The protein belongs to the class I-like SAM-binding methyltransferase superfamily. RNA methyltransferase RlmE family.

It is found in the cytoplasm. It carries out the reaction uridine(2552) in 23S rRNA + S-adenosyl-L-methionine = 2'-O-methyluridine(2552) in 23S rRNA + S-adenosyl-L-homocysteine + H(+). Specifically methylates the uridine in position 2552 of 23S rRNA at the 2'-O position of the ribose in the fully assembled 50S ribosomal subunit. In Glaesserella parasuis serovar 5 (strain SH0165) (Haemophilus parasuis), this protein is Ribosomal RNA large subunit methyltransferase E.